A 1588-amino-acid chain; its full sequence is Paternally-expressed gene 3 protein (1588 aa).

Positions 46-128 constitute an SCAN box domain; sequence HQRFRNLIYV…TLLENYKEMY (83 aa). Disordered regions lie at residues 128–230, 266–306, and 319–349; these read YQPE…ESYQ, DGHS…RRGI, and KFIK…MSDD. A compositionally biased stretch (acidic residues) spans 129–142; it reads QPEDDNNSDVTSDD. 4 stretches are compositionally biased toward basic and acidic residues: residues 143–152, 161–182, 206–225, and 295–306; these read DMTRNRRESS, SGDR…DRWS, FEMD…RSQD, and PEAKKSTHRRGI. 3 consecutive C2H2-type zinc fingers follow at residues 454–476, 507–529, and 565–587; these read YVCD…QIMH, FECK…RKIH, and YECR…QKIH. Residues 588 to 607 are compositionally biased toward basic and acidic residues; sequence FGDDKDNEREHERERERGET. The interval 588–610 is disordered; that stretch reads FGDDKDNEREHERERERGETFRP. The C2H2-type 4 zinc finger occupies 627 to 649; the sequence is YECKVCGETFLHSSSLKEHQKIH. The segment at 838 to 930 is disordered; that stretch reads LVASKPPRSH…EFSVPSSNVR (93 aa). Over residues 868–881 the composition is skewed to basic and acidic residues; the sequence is LNDKRQKIPARENP. The C2H2-type 5 zinc finger occupies 969-991; sequence YECQECGECFAHSSDLTEHQKIH. Residues 1056 to 1104 are disordered; it reads EKSHGEESQGENTDGEETHSEETHGQETIEDPVIQGSDMEDPQKDDPDD. The span at 1071–1082 shows a compositional bias: basic and acidic residues; sequence EETHSEETHGQE. 5 consecutive C2H2-type zinc fingers follow at residues 1107 to 1129, 1163 to 1185, 1225 to 1247, 1282 to 1304, and 1332 to 1354; these read YECE…QKVH, YECP…QRIH, IRCL…MRLH, FECA…VTVH, and YECK…KELH. A disordered region spans residues 1393–1495; that stretch reads EAAEPEVEAX…GIEDPEEGED (103 aa). The span at 1395 to 1415 shows a compositional bias: acidic residues; it reads AEPEVEAXEPEVEAAEPEVEA. Tandem repeats lie at residues 1397 to 1403, 1404 to 1410, 1411 to 1417, 1418 to 1422, 1425 to 1429, 1432 to 1436, and 1439 to 1443. A 3 X 7 AA repeat of P-E-V-E-A-A-E region spans residues 1397–1417; it reads PEVEAXEPEVEAAEPEVEAAE. The interval 1418–1443 is 4 X 5 AA repeat of P-X-G-E-A; it reads PNGEAEGPDGEAAEPIGEAGQPNGEA. 2 stretches are compositionally biased toward acidic residues: residues 1449–1466 and 1475–1495; these read DADE…ERAE and PEGD…EGED. C2H2-type zinc fingers lie at residues 1505-1527 and 1564-1586; these read YDCH…LKTH and FKCD…QNTH.

The protein belongs to the krueppel C2H2-type zinc-finger protein family. In terms of assembly, homodimer. Interacts with SIAH1A and SIAH2. Interacts with TRAF2.

The protein localises to the nucleus. It is found in the cytoplasm. Functionally, induces apoptosis in cooperation with SIAH1A. Acts as a mediator between p53/TP53 and BAX in a neuronal death pathway that is activated by DNA damage. Acts synergistically with TRAF2 and inhibits TNF induced apoptosis through activation of NF-kappa-B. The sequence is that of Paternally-expressed gene 3 protein (PEG3) from Pan paniscus (Pygmy chimpanzee).